The following is a 228-amino-acid chain: Endonuclease V (228 aa).

Mg(2+)-binding residues include aspartate 43 and aspartate 109.

Belongs to the endonuclease V family. Mg(2+) is required as a cofactor.

Its subcellular location is the cytoplasm. It carries out the reaction Endonucleolytic cleavage at apurinic or apyrimidinic sites to products with a 5'-phosphate.. In terms of biological role, DNA repair enzyme involved in the repair of deaminated bases. Selectively cleaves double-stranded DNA at the second phosphodiester bond 3' to a deoxyinosine leaving behind the intact lesion on the nicked DNA. The sequence is that of Endonuclease V from Dictyoglomus thermophilum (strain ATCC 35947 / DSM 3960 / H-6-12).